Here is a 1132-residue protein sequence, read N- to C-terminus: Phosphatidylinositide phosphatase SAC2 (1132 aa).

Residues 167–518 (LKMFMDSESF…GDSISRQYAG (352 aa)) enclose the SAC domain. Residues 250-269 (ESSDDDKSSPETPPQDSTCV) are disordered. Positions 593–760 (RSHQELISQL…KSSKPHEDII (168 aa)) constitute a hSac2 domain. Ser-714, Ser-827, and Ser-830 each carry phosphoserine. The segment at 833 to 872 (TMENPGVMGNKVQGESDGDISSDNDSYHSDEFLTNSKSEE) is disordered. The span at 857–872 (DSYHSDEFLTNSKSEE) shows a compositional bias: basic and acidic residues. Phosphoserine is present on residues Ser-879, Ser-882, Ser-908, and Ser-911. Composition is skewed to polar residues over residues 908–918 (SASSIDVSTHA) and 994–1005 (RVSNEETQSEPM). 2 disordered regions span residues 908 to 951 (SASS…HTRT) and 981 to 1016 (VAQKSEEGSHKTNRVSNEETQSEPMGQTPPRPSQLN). Ser-1103 is subject to Phosphoserine.

Homodimer. Interacts with OCRL and RAB5. Interacts with INPP5B and INPP4A. Interacts with STAT3; the interaction is independent of STAT3 'Tyr-705' phosphorylation status. Highly expressed in brain and hypothalamus, expressed in lung and pancreas, and detected at low levels in liver and heart (at protein level).

Its subcellular location is the membrane. The protein localises to the clathrin-coated pit. It localises to the early endosome. It is found in the recycling endosome. The catalysed reaction is a myo-inositol phosphate + H2O = myo-inositol + phosphate. Functionally, inositol 4-phosphatase which mainly acts on phosphatidylinositol 4-phosphate. May be functionally linked to OCRL, which converts phosphatidylinositol 4,5-bisphosphate to phosphatidylinositol, for a sequential dephosphorylation of phosphatidylinositol 4,5-bisphosphate at the 5 and 4 position of inositol, thus playing an important role in the endocytic recycling. Regulator of TF:TFRC and integrins recycling pathway, is also involved in cell migration mechanisms. Modulates AKT/GSK3B pathway by decreasing AKT and GSK3B phosphorylation. Negatively regulates STAT3 signaling pathway through inhibition of STAT3 phosphorylation and translocation to the nucleus. Functionally important modulator of cardiac myocyte size and of the cardiac response to stress. May play a role as negative regulator of axon regeneration after central nervous system injuries. The chain is Phosphatidylinositide phosphatase SAC2 from Mus musculus (Mouse).